Here is a 386-residue protein sequence, read N- to C-terminus: Phosphoglycerate kinase (386 aa).

Substrate-binding positions include 21 to 23 (DLN), arginine 36, 59 to 62 (HLGR), arginine 113, and arginine 146. ATP-binding positions include lysine 197, glutamate 313, and 339–342 (GGDT).

This sequence belongs to the phosphoglycerate kinase family. As to quaternary structure, monomer.

The protein localises to the cytoplasm. The catalysed reaction is (2R)-3-phosphoglycerate + ATP = (2R)-3-phospho-glyceroyl phosphate + ADP. It participates in carbohydrate degradation; glycolysis; pyruvate from D-glyceraldehyde 3-phosphate: step 2/5. This is Phosphoglycerate kinase from Serratia proteamaculans (strain 568).